The primary structure comprises 212 residues: Pyridoxine/pyridoxamine 5'-phosphate oxidase (212 aa).

Residues 8–11 and Lys-66 each bind substrate; that span reads RREY. Residues 61–66, 76–77, Arg-82, Lys-83, and Gln-105 contribute to the FMN site; these read RIVLLK and FT. Substrate-binding residues include Tyr-123, Arg-127, and Ser-131. Residues 140 to 141 and Trp-185 contribute to the FMN site; that span reads QS. Residue 191 to 193 participates in substrate binding; sequence RLH. An FMN-binding site is contributed by Arg-195.

It belongs to the pyridoxamine 5'-phosphate oxidase family. Homodimer. FMN is required as a cofactor.

It catalyses the reaction pyridoxamine 5'-phosphate + O2 + H2O = pyridoxal 5'-phosphate + H2O2 + NH4(+). The catalysed reaction is pyridoxine 5'-phosphate + O2 = pyridoxal 5'-phosphate + H2O2. Its pathway is cofactor metabolism; pyridoxal 5'-phosphate salvage; pyridoxal 5'-phosphate from pyridoxamine 5'-phosphate: step 1/1. It functions in the pathway cofactor metabolism; pyridoxal 5'-phosphate salvage; pyridoxal 5'-phosphate from pyridoxine 5'-phosphate: step 1/1. In terms of biological role, catalyzes the oxidation of either pyridoxine 5'-phosphate (PNP) or pyridoxamine 5'-phosphate (PMP) into pyridoxal 5'-phosphate (PLP). The sequence is that of Pyridoxine/pyridoxamine 5'-phosphate oxidase from Shewanella halifaxensis (strain HAW-EB4).